The sequence spans 70 residues: Conotoxin Pl171 (70 aa).

The N-terminal stretch at 1-21 (MGMRMMFTMILLVVLVTTVVS) is a signal peptide. 2 disulfides stabilise this stretch: C54/C61 and C55/C67. F69 carries the phenylalanine amide modification.

The protein belongs to the conotoxin A superfamily. As to expression, expressed by the venom duct.

The protein localises to the secreted. Its function is as follows. Probable neurotoxin with unknown target. Possibly targets ion channels. The sequence is that of Conotoxin Pl171 from Conus planorbis (Planorbis cone).